The chain runs to 706 residues: Signal transducer and activator of transcription 1 (706 aa).

Positions 477-574 constitute an SH2 domain; it reads WCIGFISKND…EEMLRFFESE (98 aa).

This sequence belongs to the transcription factor STAT family. As to quaternary structure, forms a homodimer or a heterodimer with a related family member. Expressed in adult and larval pharynx, head ganglia, tail ganglia, ventral nerve cord and body muscles.

Its subcellular location is the cytoplasm. It localises to the nucleus. Carries out a dual function: signal transduction and activation of transcription. Activated STAT proteins play a role in repression of dauer formation. Neuronal expression is held in check by negative signals through the TGF-beta pathway that target the daf-3 transcription factor. In Caenorhabditis elegans, this protein is Signal transducer and activator of transcription 1.